The chain runs to 312 residues: Oxidoreductase NAD-binding domain-containing protein 1 (312 aa).

The N-terminal stretch at 1 to 17 is a signal peptide; sequence MACAAVMIPGLLRCSVG. One can recognise an FAD-binding FR-type domain in the interval 50–186; that stretch reads HMERTASVLR…GGVGINPLLS (137 aa). Position 178-183 (178-183) interacts with NAD(+); sequence GVGINP.

The sequence is that of Oxidoreductase NAD-binding domain-containing protein 1 (OXNAD1) from Homo sapiens (Human).